We begin with the raw amino-acid sequence, 364 residues long: BOLA class I histocompatibility antigen, alpha chain BL3-7 (364 aa).

The N-terminal stretch at 1 to 27 (MRVMRVMRPRTLLLLLSGVLVLTETLA) is a signal peptide. Residues 28–117 (GSHSLRYFYT…LRGYYNQSET (90 aa)) are alpha-1. Residues 28 to 310 (GSHSLRYFYT…WEPPQTSFLI (283 aa)) are Extracellular-facing. The N-linked (GlcNAc...) asparagine glycan is linked to Asn-113. The interval 118-209 (GSHNIQAMYG…ENGKDTLLRA (92 aa)) is alpha-2. Intrachain disulfides connect Cys-128-Cys-191 and Cys-230-Cys-286. The interval 210 to 301 (DPPKAHVTHH…GLQEPLTLRW (92 aa)) is alpha-3. The Ig-like C1-type domain occupies 212–298 (PKAHVTHHSI…QHEGLQEPLT (87 aa)). A connecting peptide region spans residues 302 to 310 (EPPQTSFLI). A helical transmembrane segment spans residues 311–331 (MGIIVGLVLLVVALVAGAVIW). The Cytoplasmic segment spans residues 332–364 (RKKRSGEKGRIYTQAASSDSAQGSDVSLTVPKV). Residues Ser-355 and Ser-358 each carry the phosphoserine modification.

This sequence belongs to the MHC class I family. As to quaternary structure, heterodimer of an alpha chain and a beta chain (beta-2-microglobulin).

It localises to the membrane. Its function is as follows. Involved in the presentation of foreign antigens to the immune system. In Bos taurus (Bovine), this protein is BOLA class I histocompatibility antigen, alpha chain BL3-7.